The primary structure comprises 287 residues: Troponin T, cardiac muscle (287 aa).

2 stretches are compositionally biased toward acidic residues: residues 1–31 (MSDV…EEAG) and 44–59 (EDGE…DGPV). Disordered regions lie at residues 1 to 85 (MSDV…GERV) and 124 to 208 (KDRI…EKKK). Position 2 is an N-acetylserine (S2). S2 is modified (phosphoserine; by CK2). A compositionally biased stretch (pro residues) spans 66-79 (APGPFMPNLVPPKI). Composition is skewed to basic and acidic residues over residues 124-173 (KDRI…DEAR) and 192-208 (QAER…EKKK). S197 carries the post-translational modification Phosphoserine; by PKC/PRKCA. T202 carries the post-translational modification Phosphothreonine; by PKC/PRKCA and RAF1. Residue T283 is modified to Phosphothreonine; by PKC/PRKCA.

It belongs to the troponin T family. Phosphorylation at Thr-202 by PRKCA induces significant reduction in myofilament calcium sensitivity and actomyosin ATPase activity.

Its function is as follows. Troponin T is the tropomyosin-binding subunit of troponin, the thin filament regulatory complex which confers calcium-sensitivity to striated muscle actomyosin ATPase activity. The sequence is that of Troponin T, cardiac muscle (TNNT2) from Ovis aries (Sheep).